A 649-amino-acid polypeptide reads, in one-letter code: Serine/threonine kinase-like domain-containing protein STKLD1 (649 aa).

Basic and acidic residues predominate over residues 1 to 13 (MLGPESDGRRPTQ). Residues 1–23 (MLGPESDGRRPTQGERGPGYPGE) form a disordered region. A Protein kinase domain is found at 28-379 (YQVLYQLNPG…CNQAITSAVL (352 aa)). Residues 34–42 (LNPGALGVN) and Lys57 contribute to the ATP site. Positions 621-640 (FSKPGLPPGGSPQPGCTASG) are disordered.

This sequence belongs to the protein kinase superfamily. Ser/Thr protein kinase family. STKL subfamily.

The polypeptide is Serine/threonine kinase-like domain-containing protein STKLD1 (STKLD1) (Macaca fascicularis (Crab-eating macaque)).